Consider the following 178-residue polypeptide: MAPPPPSPPSVTLRTVLLLLRVLTAAFLVITVVLISTNTVTLEVSSTSIKMRFNDVYAYRYMLSAAVIGLLYAVVQLFLTISQFATGTTHPLNYQFNFYGDKIISYLLATGSAAGFGVSKDLKETFLALIEFDSTDPVDKFFSKGYASASLLLFAFVSLAVLSVFSSLALSKRPIQVS.

Topologically, residues 1-14 (MAPPPPSPPSVTLR) are cytoplasmic. A helical transmembrane segment spans residues 15 to 35 (TVLLLLRVLTAAFLVITVVLI). Over 36–60 (STNTVTLEVSSTSIKMRFNDVYAYR) the chain is Extracellular. A helical membrane pass occupies residues 61–81 (YMLSAAVIGLLYAVVQLFLTI). Residues 82–149 (SQFATGTTHP…KFFSKGYASA (68 aa)) are Cytoplasmic-facing. Residues 150 to 170 (SLLLFAFVSLAVLSVFSSLAL) form a helical membrane-spanning segment. Residues 171 to 178 (SKRPIQVS) lie on the Extracellular side of the membrane.

This sequence belongs to the Casparian strip membrane proteins (CASP) family. Homodimer and heterodimers.

The protein localises to the cell membrane. The polypeptide is CASP-like protein 4D1 (Arabidopsis lyrata subsp. lyrata (Lyre-leaved rock-cress)).